The following is a 354-amino-acid chain: Vascular endothelial growth factor D (354 aa).

A signal peptide spans Met-1–Gly-21. Positions Ser-22 to Arg-88 are cleaved as a propeptide — or 99 (in a minor form). Disulfide bonds link Cys-111–Cys-153, Cys-142–Cys-189, and Cys-146–Cys-191. Asn-155 and Asn-185 each carry an N-linked (GlcNAc...) asparagine glycan. Positions Ser-206–Pro-354 are excised as a propeptide. The stretch at Cys-222–Leu-237 is one 1; approximate repeat. Positions Cys-222–Cys-318 are 4 X 16 AA repeats of C-X(10)-C-X-C-X(1,3)-C. Repeat copies occupy residues Cys-258–Cys-273, Cys-277–Cys-293, and Cys-301–Cys-318. Asn-287 is a glycosylation site (N-linked (GlcNAc...) asparagine).

The protein belongs to the PDGF/VEGF growth factor family. In terms of assembly, homodimer; non-covalent and antiparallel. Undergoes a complex proteolytic maturation which generates a variety of processed secreted forms with increased activity toward VEGFR-3 and VEGFR-2. VEGF-D first form an antiparallel homodimer linked by disulfide bonds before secretion. The fully processed VEGF-D is composed mostly of two VEGF homology domains (VHDs) bound by non-covalent interactions. Highly expressed in lung, heart, small intestine and fetal lung, and at lower levels in skeletal muscle, colon, and pancreas.

The protein localises to the secreted. In terms of biological role, growth factor active in angiogenesis, lymphangiogenesis and endothelial cell growth, stimulating their proliferation and migration and also has effects on the permeability of blood vessels. May function in the formation of the venous and lymphatic vascular systems during embryogenesis, and also in the maintenance of differentiated lymphatic endothelium in adults. Binds and activates VEGFR-2 (KDR/FLK1) and VEGFR-3 (FLT4) receptors. The polypeptide is Vascular endothelial growth factor D (Homo sapiens (Human)).